The following is a 132-amino-acid chain: Interleukin-5 (132 aa).

The first 19 residues, Met1–Ala19, serve as a signal peptide directing secretion. 3 N-linked (GlcNAc...) asparagine glycosylation sites follow: Asn45, Asn74, and Asn88.

It belongs to the IL-5 family. As to quaternary structure, homodimer; disulfide-linked. Interacts with IL5RA. Interacts with CSF2RB.

It is found in the secreted. Homodimeric cytokine expressed predominantly by T-lymphocytes and NK cells that plays an important role in the survival, differentiation, and chemotaxis of eosinophils. Also acts on activated and resting B-cells to induce immunoglobulin production, growth, and differentiation. Mechanistically, exerts its biological effects through a receptor composed of IL5RA subunit and the cytokine receptor common subunit beta/CSF2RB. Binding to the receptor leads to activation of various kinases including LYN, SYK and JAK2 and thereby propagates signals through the RAS-MAPK and JAK-STAT5 pathways respectively. In Sigmodon hispidus (Hispid cotton rat), this protein is Interleukin-5 (IL5).